The following is a 288-amino-acid chain: Polyamine aminopropyltransferase (288 aa).

One can recognise a PABS domain in the interval 9-238 (ETLHDQFGQY…GIMTFAWATD (230 aa)). Position 33 (Gln-33) interacts with S-methyl-5'-thioadenosine. Residues His-64 and Asp-88 each contribute to the spermidine site. S-methyl-5'-thioadenosine contacts are provided by residues Glu-108 and 140-141 (DG). Asp-158 (proton acceptor) is an active-site residue. 158–161 (DCTD) serves as a coordination point for spermidine. Pro-165 lines the S-methyl-5'-thioadenosine pocket.

Belongs to the spermidine/spermine synthase family. Homodimer or homotetramer.

Its subcellular location is the cytoplasm. The catalysed reaction is S-adenosyl 3-(methylsulfanyl)propylamine + putrescine = S-methyl-5'-thioadenosine + spermidine + H(+). It participates in amine and polyamine biosynthesis; spermidine biosynthesis; spermidine from putrescine: step 1/1. Catalyzes the irreversible transfer of a propylamine group from the amino donor S-adenosylmethioninamine (decarboxy-AdoMet) to putrescine (1,4-diaminobutane) to yield spermidine. In Shigella dysenteriae serotype 1 (strain Sd197), this protein is Polyamine aminopropyltransferase.